We begin with the raw amino-acid sequence, 60 residues long: UPF0337 protein SAV1625 (60 aa).

Residues 18–41 (VGNVTDNKELEKEGQQDKATGKAK) are disordered. The span at 23-41 (DNKELEKEGQQDKATGKAK) shows a compositional bias: basic and acidic residues.

This sequence belongs to the UPF0337 (CsbD) family.

This chain is UPF0337 protein SAV1625, found in Staphylococcus aureus (strain Mu50 / ATCC 700699).